The following is a 167-amino-acid chain: Phosphopantetheine adenylyltransferase (167 aa).

Substrate is bound at residue Thr9. ATP-binding positions include 9-10 and His17; that span reads TF. Substrate contacts are provided by Lys41, Leu73, and Arg87. Residues 88 to 90, Glu98, and 123 to 129 contribute to the ATP site; these read GLR and NSYISST.

It belongs to the bacterial CoaD family. In terms of assembly, homohexamer. The cofactor is Mg(2+).

The protein resides in the cytoplasm. It catalyses the reaction (R)-4'-phosphopantetheine + ATP + H(+) = 3'-dephospho-CoA + diphosphate. It functions in the pathway cofactor biosynthesis; coenzyme A biosynthesis; CoA from (R)-pantothenate: step 4/5. In terms of biological role, reversibly transfers an adenylyl group from ATP to 4'-phosphopantetheine, yielding dephospho-CoA (dPCoA) and pyrophosphate. This is Phosphopantetheine adenylyltransferase from Chromohalobacter salexigens (strain ATCC BAA-138 / DSM 3043 / CIP 106854 / NCIMB 13768 / 1H11).